We begin with the raw amino-acid sequence, 562 residues long: Membrane protein insertase YidC (562 aa).

A helical transmembrane segment spans residues 4–24 (QRIFLFLALSILGLLLWTSWE). Positions 33–71 (TEEVVEAEDDVPAPAETPDEAPDPADGETPARDRAEVED) are disordered. A compositionally biased stretch (acidic residues) spans 35–58 (EVVEAEDDVPAPAETPDEAPDPAD). The span at 61–71 (TPARDRAEVED) shows a compositional bias: basic and acidic residues. The next 4 membrane-spanning stretches (helical) occupy residues 330 to 350 (MTLS…FWLL), 356 to 376 (IVGN…LAFY), 426 to 446 (LGGC…YWVL), and 499 to 519 (IMMA…AGLV).

Belongs to the OXA1/ALB3/YidC family. Type 1 subfamily. In terms of assembly, interacts with the Sec translocase complex via SecD. Specifically interacts with transmembrane segments of nascent integral membrane proteins during membrane integration.

It localises to the cell inner membrane. Required for the insertion and/or proper folding and/or complex formation of integral membrane proteins into the membrane. Involved in integration of membrane proteins that insert both dependently and independently of the Sec translocase complex, as well as at least some lipoproteins. Aids folding of multispanning membrane proteins. The chain is Membrane protein insertase YidC from Alkalilimnicola ehrlichii (strain ATCC BAA-1101 / DSM 17681 / MLHE-1).